Reading from the N-terminus, the 510-residue chain is Glycerol kinase (510 aa).

ADP is bound at residue Thr13. The ATP site is built by Thr13 and Thr14. Thr13 is a sn-glycerol 3-phosphate binding site. Residue Arg17 coordinates ADP. Arg83, Glu84, Tyr135, and Asp255 together coordinate sn-glycerol 3-phosphate. Glycerol-binding residues include Arg83, Glu84, Tyr135, Asp255, and Gln256. ADP contacts are provided by Thr277, Gly321, Gly421, and Asn425. ATP contacts are provided by Thr277, Gly321, and Gly421.

Belongs to the FGGY kinase family.

The enzyme catalyses glycerol + ATP = sn-glycerol 3-phosphate + ADP + H(+). It functions in the pathway polyol metabolism; glycerol degradation via glycerol kinase pathway; sn-glycerol 3-phosphate from glycerol: step 1/1. Key enzyme in the regulation of glycerol uptake and metabolism. Catalyzes the phosphorylation of glycerol to yield sn-glycerol 3-phosphate. The polypeptide is Glycerol kinase (Haloquadratum walsbyi (strain DSM 16790 / HBSQ001)).